Here is a 763-residue protein sequence, read N- to C-terminus: Elongation factor G, mitochondrial (763 aa).

A mitochondrion-targeting transit peptide spans 1–52 (MFMRLKVLEMNSIRRQTLLRQFTNVYNVVSRSARLCSQAIPKRLFYSTGSRA). The region spanning 60-347 (SRLRNIGISA…AVCDYLPNPS (288 aa)) is the tr-type G domain. Residues 69-76 (AHIDSGKT), 145-149 (DTPGH), and 199-202 (NKMD) contribute to the GTP site.

Belongs to the TRAFAC class translation factor GTPase superfamily. Classic translation factor GTPase family. EF-G/EF-2 subfamily.

It localises to the mitochondrion. It functions in the pathway protein biosynthesis; polypeptide chain elongation. Functionally, mitochondrial GTPase that catalyzes the GTP-dependent ribosomal translocation step during translation elongation. During this step, the ribosome changes from the pre-translocational (PRE) to the post-translocational (POST) state as the newly formed A-site-bound peptidyl-tRNA and P-site-bound deacylated tRNA move to the P and E sites, respectively. Catalyzes the coordinated movement of the two tRNA molecules, the mRNA and conformational changes in the ribosome. This chain is Elongation factor G, mitochondrial (mef1), found in Schizosaccharomyces japonicus (strain yFS275 / FY16936) (Fission yeast).